We begin with the raw amino-acid sequence, 298 residues long: Thymidylate synthase (298 aa).

Residues arginine 25 and 159-160 (RR) each bind dUMP. Catalysis depends on cysteine 179, which acts as the Nucleophile. Residues 200–203 (RSVD), asparagine 211, and 241–243 (HLY) each bind dUMP. Aspartate 203 lines the (6R)-5,10-methylene-5,6,7,8-tetrahydrofolate pocket. Residue alanine 297 coordinates (6R)-5,10-methylene-5,6,7,8-tetrahydrofolate.

The protein belongs to the thymidylate synthase family. Bacterial-type ThyA subfamily. In terms of assembly, homodimer.

The protein resides in the cytoplasm. It carries out the reaction dUMP + (6R)-5,10-methylene-5,6,7,8-tetrahydrofolate = 7,8-dihydrofolate + dTMP. The protein operates within pyrimidine metabolism; dTTP biosynthesis. Catalyzes the reductive methylation of 2'-deoxyuridine-5'-monophosphate (dUMP) to 2'-deoxythymidine-5'-monophosphate (dTMP) while utilizing 5,10-methylenetetrahydrofolate (mTHF) as the methyl donor and reductant in the reaction, yielding dihydrofolate (DHF) as a by-product. This enzymatic reaction provides an intracellular de novo source of dTMP, an essential precursor for DNA biosynthesis. This is Thymidylate synthase from Cereibacter sphaeroides (strain ATCC 17029 / ATH 2.4.9) (Rhodobacter sphaeroides).